A 419-amino-acid polypeptide reads, in one-letter code: Transcription termination factor Rho (419 aa).

The region spanning 48-123 (DIFGDGVLEI…LKVNEVNYDK (76 aa)) is the Rho RNA-BD domain. RNA-binding regions lie at residues 61–66 (GFGFLR), 78–80 (DIY), and 108–110 (ERY). ATP contacts are provided by residues 169–174 (GRGQRG), 181–186 (KAGKTM), and arginine 212. Residues 284-288 (VLTGG) form an RNA-binding 2 region.

This sequence belongs to the Rho family. As to quaternary structure, homohexamer. The homohexamer assembles into an open ring structure.

Facilitates transcription termination by a mechanism that involves Rho binding to the nascent RNA, activation of Rho's RNA-dependent ATPase activity, and release of the mRNA from the DNA template. This is Transcription termination factor Rho from Salmonella typhi.